The sequence spans 79 residues: Sec-independent protein translocase protein TatA (79 aa).

The chain crosses the membrane as a helical span at residues 1–21 (MGSLSIWHWIVVIAVVLLLFG). The span at 42-60 (GLQDDEKTAEKPDAVKSLD) shows a compositional bias: basic and acidic residues. The disordered stretch occupies residues 42–79 (GLQDDEKTAEKPDAVKSLDHNATTGTPPNRTDVGSKAV). Residues 61 to 70 (HNATTGTPPN) are compositionally biased toward polar residues.

Belongs to the TatA/E family. The Tat system comprises two distinct complexes: a TatABC complex, containing multiple copies of TatA, TatB and TatC subunits, and a separate TatA complex, containing only TatA subunits. Substrates initially bind to the TatABC complex, which probably triggers association of the separate TatA complex to form the active translocon.

It localises to the cell inner membrane. Functionally, part of the twin-arginine translocation (Tat) system that transports large folded proteins containing a characteristic twin-arginine motif in their signal peptide across membranes. TatA could form the protein-conducting channel of the Tat system. This Rhodopseudomonas palustris (strain HaA2) protein is Sec-independent protein translocase protein TatA.